The following is a 188-amino-acid chain: Ribosome-recycling factor (188 aa).

It belongs to the RRF family.

The protein resides in the cytoplasm. Responsible for the release of ribosomes from messenger RNA at the termination of protein biosynthesis. May increase the efficiency of translation by recycling ribosomes from one round of translation to another. The chain is Ribosome-recycling factor from Lawsonia intracellularis (strain PHE/MN1-00).